A 424-amino-acid chain; its full sequence is 2,3-bisphosphoglycerate-independent phosphoglycerate mutase (424 aa).

This sequence belongs to the BPG-independent phosphoglycerate mutase family. A-PGAM subfamily.

It catalyses the reaction (2R)-2-phosphoglycerate = (2R)-3-phosphoglycerate. It participates in carbohydrate degradation; glycolysis; pyruvate from D-glyceraldehyde 3-phosphate: step 3/5. In terms of biological role, catalyzes the interconversion of 2-phosphoglycerate and 3-phosphoglycerate. The sequence is that of 2,3-bisphosphoglycerate-independent phosphoglycerate mutase from Aeropyrum pernix (strain ATCC 700893 / DSM 11879 / JCM 9820 / NBRC 100138 / K1).